The following is a 527-amino-acid chain: Glucose transporter 1B/1C/1D/1F/2B (527 aa).

The tract at residues 1–22 (MTERRDNVSHAPDAIEGPNDGA) is disordered. Topologically, residues 1 to 43 (MTERRDNVSHAPDAIEGPNDGAHAEDTSPGFFSLENLGVAQVQ) are cytoplasmic. The chain crosses the membrane as a helical span at residues 44 to 64 (VVGGTLNGYVIGYVAVYLLLY). The Extracellular portion of the chain corresponds to 65-118 (LTATECKFTTEGACGGRKIYGCKWSGTTCKFENPKCSEGSDPSDSCKNEVAYTS). A helical membrane pass occupies residues 119–139 (VYSGIFACAMIVGSMVGSIIA). Topologically, residues 140–151 (GKCITTFGLKKS) are cytoplasmic. Residues 152–172 (FIIVSITCTIACVVVQVAIEY) traverse the membrane as a helical segment. The Extracellular segment spans residues 173–175 (NNY). A helical membrane pass occupies residues 176–196 (YALCTGRVLIGLGVGILCSVF). Residues 197 to 213 (PMYVNENAHPKLCKMDG) are Cytoplasmic-facing. A helical membrane pass occupies residues 214–234 (VLFQVFTTLGIMLAAMLGLIL). Over 235 to 249 (DKTGASKEEANMAGR) the chain is Extracellular. A helical transmembrane segment spans residues 250–270 (LHVFSAVPLGLSVAMFLVGMF). The Cytoplasmic segment spans residues 271–299 (LRESTATFAQDDDGKADGGMDPNEYGWGQ). Residues 300–320 (MLWPLFMGAVTAGTLQLTGIN) form a helical membrane-spanning segment. At 321 to 338 (AVMNYAPKITENLGMDPS) the chain is on the extracellular side. The helical transmembrane segment at 339-359 (LGNFLVMAWNFVTSLVAIPLA) threads the bilayer. Over 360–372 (SRFTMRQMFITCS) the chain is Cytoplasmic. A helical transmembrane segment spans residues 373-393 (FVASCMCLFLCGIPVFPGVAG). The Extracellular segment spans residues 394 to 403 (KEVKNGVATT). The chain crosses the membrane as a helical span at residues 404–424 (GIALFIAAFEFGVGSCFFVLA). Topologically, residues 425–436 (QDLFPPSFRPKG) are cytoplasmic. The helical transmembrane segment at 437–457 (GSFVVMMQFIFNILINLLYPI) threads the bilayer. Residues 458–475 (TTEAISGGATGNQDKGQA) lie on the Extracellular side of the membrane. Residues 476–496 (VAFILFGLIGLICSVLQFFYL) traverse the membrane as a helical segment. The Cytoplasmic portion of the chain corresponds to 497 to 527 (YPYDANQDHENDHGGEPVEQKTYPVEASPRN). The span at 506 to 515 (ENDHGGEPVE) shows a compositional bias: basic and acidic residues. The disordered stretch occupies residues 506 to 527 (ENDHGGEPVEQKTYPVEASPRN).

Belongs to the major facilitator superfamily. Sugar transporter (TC 2.A.1.1) family.

It is found in the membrane. In terms of biological role, facilitative glucose transporter. This chain is Glucose transporter 1B/1C/1D/1F/2B (THT1B), found in Trypanosoma brucei brucei.